Reading from the N-terminus, the 141-residue chain is Large ribosomal subunit protein uL11 (141 aa).

Belongs to the universal ribosomal protein uL11 family. As to quaternary structure, part of the ribosomal stalk of the 50S ribosomal subunit. Interacts with L10 and the large rRNA to form the base of the stalk. L10 forms an elongated spine to which L12 dimers bind in a sequential fashion forming a multimeric L10(L12)X complex. In terms of processing, one or more lysine residues are methylated.

Forms part of the ribosomal stalk which helps the ribosome interact with GTP-bound translation factors. This is Large ribosomal subunit protein uL11 from Brevibacillus brevis (strain 47 / JCM 6285 / NBRC 100599).